Reading from the N-terminus, the 2144-residue chain is Polyketide synthase-like protein Preu9 (2144 aa).

A Ketosynthase family 3 (KS3) domain is found at 1-250 (MYALHLAVNA…GANAHCIIDH (250 aa)). The disordered stretch occupies residues 276 to 325 (QNGHLNEFAANGTTNAPSRDHRNGITDGRADGNTNGHPNANGDVGGNPIN). The segment covering 293–305 (SRDHRNGITDGRA) has biased composition (basic and acidic residues). The malonyl-CoA:ACP transacylase (MAT) stretch occupies residues 435 to 738 (FVFTGQGAQW…KSPVEQILKS (304 aa)). Residues 827–965 (HDLLGSKVVG…GCVKLIIKSS (139 aa)) are N-terminal hotdog fold. The segment at 827–1137 (HDLLGSKVVG…ERLRCVSYSR (311 aa)) is dehydratase (DH) domain. Residues 827-1141 (HDLLGSKVVG…CVSYSRISSD (315 aa)) enclose the PKS/mFAS DH domain. The active-site Proton acceptor; for dehydratase activity is the His-859. The tract at residues 979-1141 (TLRPVDVRAW…CVSYSRISSD (163 aa)) is C-terminal hotdog fold. The active-site Proton donor; for dehydratase activity is the Asp-1050. The methyltransferase (MT) domain stretch occupies residues 1305-1494 (TGIYPQLHRI…GLDVVLDDFP (190 aa)). Residues 1731–2042 (GVPNSLCFAS…LANMIGKLVV (312 aa)) form an enoyl reductase (ER) domain region.

Its function is as follows. Polyketide synthase-like protein that lacks important domains such as carrier domain and does probably not function as a polyketide synthase. The chain is Polyketide synthase-like protein Preu9 from Preussia isomera (Coprophilous fungus).